The primary structure comprises 381 residues: MSFRDVLERGDEFLEAYPRRSPLWRFLSYSTSLLTFGVSKLLLFTCYNVKLNGFEKLETALERSKRENRGLMTVMNHMSMVDDPLVWATLPYKLFTSLDNIRWSLGAHNICFQNKFLANFFSLGQVLSTERFGVGPFQGSIDASIRLLSPDDTLDLEWTPHSEVSSSLKKAYSPPIIRSKPSWVHVYPEGFVLQLYPPFENSMRYFKWGITRMILEATKPPIVVPIFATGFEKIASEAVTDSMFRQILPRNFGSEINVTIGDPLNDDLIDRYRKEWTHLVEKYYDPKNPNDLSDELKYGKEAQDLRSRLAAELRAHVAEIRNEVRKLPREDPRFKSPSWWKRFNTTEGKSDPDVKVIGENWAIRRMQKFLPPEGKPKGKDD.

Over M1–R25 the chain is Mitochondrial intermembrane. The stretch at F26–Y47 is an intramembrane region. Over N48–D381 the chain is Mitochondrial intermembrane. The HXXXXD motif signature appears at H77 to D82. The tract at residues L215–E232 is required for membrane insertion.

It belongs to the taffazin family.

It localises to the mitochondrion outer membrane. It is found in the mitochondrion inner membrane. It carries out the reaction 1'-[1,2-diacyl-sn-glycero-3-phospho],3'-[1-acyl-sn-glycero-3-phospho]-glycerol + a 1,2-diacyl-sn-glycero-3-phosphocholine = a cardiolipin + a 1-acyl-sn-glycero-3-phosphocholine. The catalysed reaction is 1,2-di-(9Z,12Z-octadecadienoyl)-sn-glycero-3-phosphocholine + 1'-[1,2-di-(9Z,12Z-octadecadienoyl)-sn-glycero-3-phospho]-3'-[1-(9Z,12Z-octadecadienoyl)-sn-glycero-3-phospho]-glycerol = 1-(9Z,12Z)-octadecadienoyl-sn-glycero-3-phosphocholine + 1',3'-bis-[1,2-di-(9Z,12Z-octadecadienoyl)-sn-glycero-3-phospho]-glycerol. It catalyses the reaction 1'-[1,2-di-(9Z-octadecenoyl)-sn-glycero-3-phospho]-3'-[1-(9Z-octadecenoyl)-2-hexadecanoyl-sn-glycero-3-phospho]-glycerol + 1-hexadecanoyl-sn-glycero-3-phosphocholine = 1'-[1,2-di-(9Z-octadecenoyl)-sn-glycero-3-phospho]-3'-[1-(9Z-octadecenoyl)-sn-glycero-3-phospho]-glycerol + 1,2-dihexadecanoyl-sn-glycero-3-phosphocholine. The enzyme catalyses 1'-[1,2-di-(9Z-octadecenoyl)-sn-glycero-3-phospho]-3'-[1-(9Z-octadecenoyl)-2-(9Z-hexadecenoyl)-sn-glycero-3-phospho]-glycerol + 1-(9Z-hexadecenoyl)-sn-glycero-3-phosphocholine = 1,2-di-(9Z-hexadecenoyl)-sn-glycero-3-phosphocholine + 1'-[1,2-di-(9Z-octadecenoyl)-sn-glycero-3-phospho]-3'-[1-(9Z-octadecenoyl)-sn-glycero-3-phospho]-glycerol. It carries out the reaction 1',3'-bis[1,2-di-(9Z-octadecenoyl)-sn-glycero-3-phospho]-glycerol + 1-(9Z-octadecenoyl)-sn-glycero-3-phosphocholine = 1'-[1,2-di-(9Z-octadecenoyl)-sn-glycero-3-phospho]-3'-[1-(9Z-octadecenoyl)-sn-glycero-3-phospho]-glycerol + 1,2-di-(9Z-octadecenoyl)-sn-glycero-3-phosphocholine. The catalysed reaction is 1'-[1,2-di-(9Z-octadecenoyl)-sn-glycero-3-phospho]-3'-[1-(9Z-octadecenoyl)-2-(9Z,12Z-octadecadienoyl)-sn-glycero-3-phospho]-glycerol + 1-(9Z,12Z)-octadecadienoyl-sn-glycero-3-phosphocholine = 1,2-di-(9Z,12Z-octadecadienoyl)-sn-glycero-3-phosphocholine + 1'-[1,2-di-(9Z-octadecenoyl)-sn-glycero-3-phospho]-3'-[1-(9Z-octadecenoyl)-sn-glycero-3-phospho]-glycerol. It catalyses the reaction 1'-[1,2-di-(9Z-octadecenoyl)-sn-glycero-3-phospho]-3'-[1-(9Z-octadecenoyl)-2-(9Z-hexadecenoyl)-sn-glycero-3-phospho]-glycerol + 1-hexadecanoyl-sn-glycero-3-phosphocholine = 1-hexadecanoyl-2-(9Z-hexadecenoyl)-sn-glycero-3-phosphocholine + 1'-[1,2-di-(9Z-octadecenoyl)-sn-glycero-3-phospho]-3'-[1-(9Z-octadecenoyl)-sn-glycero-3-phospho]-glycerol. The enzyme catalyses 1'-[1,2-di-(9Z-octadecenoyl)-sn-glycero-3-phospho]-3'-[1-(9Z-octadecenoyl)-2-hexadecanoyl-sn-glycero-3-phospho]-glycerol + 1-(9Z-hexadecenoyl)-sn-glycero-3-phosphocholine = 1-(9Z-hexadecenoyl)-2-hexadecanoyl-sn-glycero-3-phosphocholine + 1'-[1,2-di-(9Z-octadecenoyl)-sn-glycero-3-phospho]-3'-[1-(9Z-octadecenoyl)-sn-glycero-3-phospho]-glycerol. It carries out the reaction 2 1'-[1,2-diacyl-sn-glycero-3-phospho],3'-[1-acyl-sn-glycero-3-phospho]-glycerol = 1',3'-bis-[1-acyl-sn-glycero-3-phospho]-glycerol + a cardiolipin. The catalysed reaction is 2 1'-[1,2-di-(9Z-octadecenoyl)-sn-glycero-3-phospho]-3'-[1-(9Z-octadecenoyl)-sn-glycero-3-phospho]-glycerol = 1',3'-bis-[1-(9Z-octadecenoyl)-sn-glycero-3-phospho]-glycerol + 1',3'-bis[1,2-di-(9Z-octadecenoyl)-sn-glycero-3-phospho]-glycerol. It catalyses the reaction 1,2-di-(9Z-hexadecenoyl)-sn-glycero-3-phosphocholine + 1-hexadecanoyl-sn-glycero-3-phosphocholine = 1-hexadecanoyl-2-(9Z-hexadecenoyl)-sn-glycero-3-phosphocholine + 1-(9Z-hexadecenoyl)-sn-glycero-3-phosphocholine. The enzyme catalyses 1'-[1,2-di-(9Z,12Z-octadecadienoyl)-sn-glycero-3-phospho]-3'-[1-(9Z,12Z-octadecadienoyl)-sn-glycero-3-phospho]-glycerol + 1,2-di-(9Z-octadecenoyl)-sn-glycero-3-phosphocholine = 1'-[1,2-di-(9Z,12Z-octadecadienoyl)-sn-glycero-3-phospho]-3'-[1-(9Z,12Z-octadecadienoyl)-2-(9Z-octadecenoyl)-sn-glycero-3-phospho]-glycerol + 1-(9Z-octadecenoyl)-sn-glycero-3-phosphocholine. It participates in phospholipid metabolism. Acyltransferase required to remodel newly synthesized phospholipid cardiolipin (1',3'-bis-[1,2-diacyl-sn-glycero-3-phospho]-glycerol or CL), a key component of the mitochondrial inner membrane, with tissue specific acyl chains necessary for adequate mitochondrial function. Its role in cellular physiology is to improve mitochondrial performance. CL is critical for the coassembly of lipids and proteins in mitochondrial membranes, for instance, remodeling of the acyl groups of CL in the mitochondrial inner membrane affects the assembly and stability of respiratory chain complex IV and its supercomplex forms. Catalyzes the transacylation between phospholipids and lysophospholipids, with the highest rate being between phosphatidylcholine (1,2-diacyl-sn-glycero-3-phosphocholine or PC) and CL. Catalyzes both 1-acyl-sn-glycero-3-phosphocholine (lysophosphatidylcholine or LPC) reacylation and PC-CL transacylation, that means, it exchanges acyl groups between CL and PC by a combination of forward and reverse transacylations. Also catalyzes transacylations between other phospholipids such as phosphatidylethanolamine (1,2-diacyl-sn-glycero-3-phosphoethanolamine or PE) and CL, between PC and PE, and between PC and phosphatidate (1,2-diacyl-sn-glycero-3-phosphate or PA), although at lower rate. Not regiospecific, it transfers acyl groups into any of the sn-1 and sn-2 positions of the monolysocardiolipin (MLCL), which is an important prerequisite for uniformity and symmetry in CL acyl distribution. Cannot transacylate dilysocardiolipin (DLCL), thus, the role of MLCL is limited to that of an acyl acceptor. CoA-independent, it can reshuffle molecular species within a single phospholipid class. Redistributes fatty acids between MLCL, CL, and other lipids, which prolongs the half-life of CL. Its action is completely reversible, which allows for cyclic changes, such as fission and fusion or bending and flattening of the membrane. Hence, by contributing to the flexibility of the lipid composition, it plays an important role in the dynamics of mitochondria membranes. Essential for the final stage of spermatogenesis, spermatid individualization. Required for the initiation of mitophagy. In Saccharomyces cerevisiae (strain ATCC 204508 / S288c) (Baker's yeast), this protein is Tafazzin (TAZ1).